The following is a 250-amino-acid chain: Cyclopentanol dehydrogenase (250 aa).

NAD(+) is bound by residues M18, D37, D63, V64, N90, Y155, K159, I188, T190, and T193. The active-site Proton acceptor is the Y155.

The protein belongs to the short-chain dehydrogenases/reductases (SDR) family.

The enzyme catalyses cyclopentanol + NAD(+) = cyclopentanone + NADH + H(+). It carries out the reaction cyclohexanol + NAD(+) = cyclohexanone + NADH + H(+). It functions in the pathway alcohol metabolism; cyclopentanol degradation; 5-valerolactone from cyclopentanol: step 1/2. Functionally, catalyzes the oxidation of cyclopentanol to cyclopentanone and cyclohexanol to cyclohexanone. The activity toward cyclohexanol is 60% that of cyclopentanol. The sequence is that of Cyclopentanol dehydrogenase from Comamonas sp. (strain NCIMB 9872).